The sequence spans 77 residues: Small ribosomal subunit protein bS20 (77 aa).

This sequence belongs to the bacterial ribosomal protein bS20 family.

Functionally, binds directly to 16S ribosomal RNA. The chain is Small ribosomal subunit protein bS20 from Streptococcus agalactiae serotype Ia (strain ATCC 27591 / A909 / CDC SS700).